A 260-amino-acid polypeptide reads, in one-letter code: Indole-3-glycerol phosphate synthase (260 aa).

This sequence belongs to the TrpC family.

It carries out the reaction 1-(2-carboxyphenylamino)-1-deoxy-D-ribulose 5-phosphate + H(+) = (1S,2R)-1-C-(indol-3-yl)glycerol 3-phosphate + CO2 + H2O. Its pathway is amino-acid biosynthesis; L-tryptophan biosynthesis; L-tryptophan from chorismate: step 4/5. The sequence is that of Indole-3-glycerol phosphate synthase from Koribacter versatilis (strain Ellin345).